The chain runs to 170 residues: Adenine phosphoribosyltransferase (170 aa).

This sequence belongs to the purine/pyrimidine phosphoribosyltransferase family. As to quaternary structure, homodimer.

The protein resides in the cytoplasm. It catalyses the reaction AMP + diphosphate = 5-phospho-alpha-D-ribose 1-diphosphate + adenine. It functions in the pathway purine metabolism; AMP biosynthesis via salvage pathway; AMP from adenine: step 1/1. In terms of biological role, catalyzes a salvage reaction resulting in the formation of AMP, that is energically less costly than de novo synthesis. This chain is Adenine phosphoribosyltransferase, found in Thermotoga sp. (strain RQ2).